The primary structure comprises 326 residues: High-affinity zinc uptake system protein ZnuA (326 aa).

The first 22 residues, 1–22 (MIRPSSLVLAAALGTAALPARA), serve as a signal peptide directing secretion. Histidine 59 contributes to the Zn(2+) binding site. Positions 117–155 (GGEHEHEHEHEHEHEHEHEHDGHGHAEEQAHHDHDHSGT) are enriched in basic and acidic residues. The interval 117–161 (GGEHEHEHEHEHEHEHEHEHDGHGHAEEQAHHDHDHSGTDPHAWL) is disordered. Residues histidine 158, histidine 222, and aspartate 295 each contribute to the Zn(2+) site. The cysteines at positions 267 and 322 are disulfide-linked.

Belongs to the bacterial solute-binding protein 9 family. In terms of assembly, monomer.

Its subcellular location is the periplasm. Part of the ATP-binding cassette (ABC) transport system ZnuABC involved in zinc import. Binds zinc with high affinity and specificity and delivers it to the membrane permease for translocation into the cytoplasm. The chain is High-affinity zinc uptake system protein ZnuA from Paracoccus denitrificans (strain Pd 1222).